The sequence spans 865 residues: Anaphase-promoting complex subunit 2 (865 aa).

This sequence belongs to the cullin family. As to quaternary structure, the APC/C is composed of at least 10 subunits. Interacts with APC8, APC11, CDC27A and CDC27B. As to expression, highly expressed in immature flowers. Expressed in stems, leaves and flowers.

The protein resides in the nucleus. The protein operates within protein modification; protein ubiquitination. Component of the anaphase promoting complex/cyclosome (APC/C), a cell cycle-regulated E3 ubiquitin-protein ligase complex that controls progression through mitosis and the G1 phase of the cell cycle. The APC/C complex controls several key steps in the cell cycle by mediating ubiquitination and subsequent degradation of target proteins such as cyclins. The APC/C complex is required for the female gametophyte development and is involved in several aspect of development by controlling cell division and cell elongation. Involved in the control of endoreduplication. The protein is Anaphase-promoting complex subunit 2 (APC2) of Arabidopsis thaliana (Mouse-ear cress).